An 829-amino-acid chain; its full sequence is Probable receptor-like protein kinase At5g59700 (829 aa).

The first 24 residues, 1–24 (MGGEKFGFLIWILSIPCLIFLCYG), serve as a signal peptide directing secretion. Topologically, residues 25 to 406 (YVPVDNYLIN…SSTTKKNVGM (382 aa)) are extracellular. 4 N-linked (GlcNAc...) asparagine glycosylation sites follow: asparagine 40, asparagine 216, asparagine 279, and asparagine 380. A helical membrane pass occupies residues 407–427 (IIGLTIGSLLALVVLGGFFVL). Topologically, residues 428–829 (YKKRGRDQDG…FSQLIKSEGR (402 aa)) are cytoplasmic. The Protein kinase domain maps to 482–755 (FDENRAIGVG…GDVLWNLEYA (274 aa)). ATP contacts are provided by residues 488–496 (IGVGGFGKV) and lysine 510. Aspartate 606 acts as the Proton acceptor in catalysis.

Belongs to the protein kinase superfamily. Ser/Thr protein kinase family.

The protein localises to the cell membrane. This Arabidopsis thaliana (Mouse-ear cress) protein is Probable receptor-like protein kinase At5g59700.